The sequence spans 272 residues: MSSANNISGAPETGDFTFTQHFNVSATPSEFLASIWPYRHMMWIGPMLLFLAPRFYNTLKNTAFSRAYHMPYSILALHVFISFVDLANYHTQVFLANGAIHPASQIDALICIVQCWTSLYITAQHHLLPKIAMEVTRATFHCMSVQRLFATAMAIRTGDPRWHEASIMLLNNFIWARLLIAYCKMGRFSWKQRYGVGIVGSHLLGMWNGTYPHGIAIYCGLMVVLLNIDGWAKGRDSSVARALRYLGLATPADWYIKVGIDPPTKSAEKKEA.

2 N-linked (GlcNAc...) asparagine glycosylation sites follow: Asn6 and Asn23. Transmembrane regions (helical) follow at residues 31-51 (FLAS…LLFL) and 67-87 (AYHM…VDLA). Asn208 is a glycosylation site (N-linked (GlcNAc...) asparagine).

The protein resides in the membrane. It functions in the pathway antibiotic biosynthesis. Functionally, part of the gene cluster that mediates the biosynthesis of sordarin and hypoxysordarin, glycoside antibiotics with a unique tetracyclic diterpene aglycone structure. First, the geranylgeranyl diphosphate synthase sdnC constructs GGDP from farnesyl diphosphate and isopentenyl diphosphate. The diterpene cyclase sdnA then catalyzes the cyclization of GGDP to afford cycloaraneosene. Cycloaraneosene is then hydroxylated four times by the putative cytochrome P450 monooxygenases sdnB, sdnE, sdnF and sdnH to give a hydroxylated cycloaraneosene derivative such as cycloaraneosene-8,9,13,19-tetraol. Although the order of the hydroxylations is unclear, at least C8, C9 and C13 of the cycloaraneosene skeleton are hydroxylated before the sordaricin formation. Dehydration of the 13-hydroxy group of the hydroxylated cycloaraneosene derivative might be catalyzed by an unassigned hypothetical protein such as sdnG and sdnP to construct the cyclopentadiene moiety. The FAD-dependent oxidoreductase sdnN is proposed to catalyze the oxidation at C9 of the hydroxylated cycloaraneosene derivative and also catalyze the Baeyer-Villiger oxidation to give the lactone intermediate. The presumed lactone intermediate would be hydrolyzed to give an acrolein moiety and a carboxylate moiety. Then, [4+2]cycloaddition would occur between the acrolein moiety and the cyclopentadiene moiety to give sordaricin. SdnN might also be involved in the [4+2]cycloaddition after the hypothesized oxidation to accommodate the oxidized product and prompt the [4+2]cycloaddition. GDP-6-deoxy-D-altrose may be biosynthesized from GDP-D-mannose by the putative GDP-mannose-4,6-dehydratase sdnI and the short-chain dehydrogenase sdnK. The glycosyltransferase sdnJ catalyzes the attachment of 6-deoxy-D-altrose onto the 19-hydroxy group of sordaricin to give 4'-O-demethylsordarin. The methyltransferase sdnD would complete the biosynthesis of sordarin. Sordarin can be further modified into hypoxysordarin. The unique acyl chain at the 3'-hydroxy group of hypoxysordarin would be constructed by an iterative type I PKS sdnO and the trans-acting polyketide methyltransferase sdnL. SdnL would be responsible for the introduction of an alpha-methyl group of the polyketide chain. Alternatively, the beta-lactamase-like protein sdnR might be responsible for the cleavage and transfer of the polyketide chain from the PKS sdnO to sordarin. Two putative cytochrome P450 monooxygenases, sdnQ and sdnT, might catalyze the epoxidations of the polyketide chain to complete the biosynthesis of hypoxysordarin. Transcriptional regulators sdnM and sdnS are presumably encoded for the transcriptional regulation of the expression of the sdn gene cluster. The polypeptide is Sordarin/hypoxysordarin biosynthesis cluster protein P (Sordaria araneosa (Pleurage araneosa)).